The sequence spans 198 residues: Recombination protein RecR (198 aa).

The C4-type zinc finger occupies 58-73 (CSVCGNFTDKDPCAIC). One can recognise a Toprim domain in the interval 81–175 (SIICVIEQPK…KVTRIAHGVP (95 aa)).

Belongs to the RecR family.

Its function is as follows. May play a role in DNA repair. It seems to be involved in an RecBC-independent recombinational process of DNA repair. It may act with RecF and RecO. The polypeptide is Recombination protein RecR (Clostridium botulinum (strain ATCC 19397 / Type A)).